A 504-amino-acid polypeptide reads, in one-letter code: Dihydrolipoamide dehydrogenase (504 aa).

The N-terminal 34 residues, 1–34, are a transit peptide targeting the mitochondrion; that stretch reads MLSQRLIGRTAVKSAFRPSGLPTVVNASRWRRGY. Residues 69–78, Lys87, Gly151, and 180–182 contribute to the FAD site; these read EKRGTLGGTC and TGS. Cys78 and Cys83 are oxidised to a cystine. NAD(+) contacts are provided by residues 217-224, Glu240, Val275, and Gly310; that span reads GGGIIGLE. FAD contacts are provided by residues Asp351 and 357 to 360; that span reads MLAH. Residue His483 is the Proton acceptor of the active site.

This sequence belongs to the class-I pyridine nucleotide-disulfide oxidoreductase family. In terms of assembly, eukaryotic pyruvate dehydrogenase (PDH) complexes are organized as a core consisting of the oligomeric dihydrolipoamide acetyl-transferase (E2), around which are arranged multiple copies of pyruvate dehydrogenase (E1), dihydrolipoamide dehydrogenase (E3) and protein X (E3BP) bound by non-covalent bonds. The Chaetomium thermophilum PDH complex contains 60 E2 units, 12 E3BP units, about 20 E1 units, and 12 or more E3 units. The units are organized in 1 E2 60-mer, 4 E3BP trimers, about 20 E1 tetramers, and a maximum of 12 E3 dimers. The E3BP trimers are bound inside the icosahedral core with tetrahedral symmetry. It depends on FAD as a cofactor.

Its subcellular location is the mitochondrion. The enzyme catalyses N(6)-[(R)-dihydrolipoyl]-L-lysyl-[protein] + NAD(+) = N(6)-[(R)-lipoyl]-L-lysyl-[protein] + NADH + H(+). Its function is as follows. Lipoamide dehydrogenase is a component of the alpha-ketoacid dehydrogenase complexes. This includes the pyruvate dehydrogenase complex, which catalyzes the overall conversion of pyruvate to acetyl-CoA and CO(2). Also acts as a component of the glycine cleavage system (glycine decarboxylase complex), which catalyzes the degradation of glycine. The 10-megadalton pyruvate dehydrogenase complex contains multiple copies of three enzymatic components: pyruvate dehydrogenase (E1), dihydrolipoamide acetyltransferase (E2) and lipoamide dehydrogenase (E3) and catalyzes the overall oxidative decarboxylation of pyruvate to form acetyl-CoA and CO(2). Within the complex, pyruvate and thiamine pyrophosphate (TPP or vitamin B1) are bound by pyruvate dehydrogenase E1 subunits alpha and beta and pyruvate is decarboxylated leading to the 2-carbon hydrohyethyl bound to TPP. The E2 component contains covalently-bound lipoyl cofactors and transfers the hydroxyethyl group from TPP to an oxidized form of covalently bound lipoamide, and the resulting acetyl group is then transferred to free coenzyme A to form acetyl-CoA and reduced dihydrolipoamide-E2. Finally, the flavoprotein dihydrolipoamide dehydrogenase (E3) re-oxidizes the lipoyl group of dihydrolipoamide-E2 to form lipoamide-E2 and NADH. A fourth subunit, E3BP, is responsible for tethering E3 in proximity to the core, forming the entire metabolon. This is Dihydrolipoamide dehydrogenase from Chaetomium thermophilum (strain DSM 1495 / CBS 144.50 / IMI 039719) (Thermochaetoides thermophila).